A 139-amino-acid polypeptide reads, in one-letter code: Translation initiation factor 2 subunit beta (139 aa).

This sequence belongs to the eIF-2-beta/eIF-5 family. As to quaternary structure, heterotrimer composed of an alpha, a beta and a gamma chain.

In terms of biological role, eIF-2 functions in the early steps of protein synthesis by forming a ternary complex with GTP and initiator tRNA. The polypeptide is Translation initiation factor 2 subunit beta (Saccharolobus solfataricus (strain ATCC 35092 / DSM 1617 / JCM 11322 / P2) (Sulfolobus solfataricus)).